We begin with the raw amino-acid sequence, 284 residues long: Elongation factor Ts (284 aa).

Residues 80 to 83 (TDFV) form an involved in Mg(2+) ion dislocation from EF-Tu region.

Belongs to the EF-Ts family.

It localises to the cytoplasm. In terms of biological role, associates with the EF-Tu.GDP complex and induces the exchange of GDP to GTP. It remains bound to the aminoacyl-tRNA.EF-Tu.GTP complex up to the GTP hydrolysis stage on the ribosome. In Neisseria gonorrhoeae (strain ATCC 700825 / FA 1090), this protein is Elongation factor Ts.